The primary structure comprises 86 residues: Short neurotoxin homolog NTL1 (86 aa).

The first 21 residues, 1 to 21 (MKTLLLSLVVLTIACLDLGYT), serve as a signal peptide directing secretion. Cystine bridges form between C24-C45, C38-C62, C66-C78, and C79-C84.

In terms of tissue distribution, expressed by the venom gland.

The protein resides in the secreted. In Bungarus multicinctus (Many-banded krait), this protein is Short neurotoxin homolog NTL1.